Reading from the N-terminus, the 461-residue chain is Photosynthetic NDH subunit of subcomplex B 1, chloroplastic (461 aa).

The transit peptide at 1–44 (MASSLPLLPKPISPFFKTPPFSTSKPLVFLNFQTRLTSRSSDVS) directs the protein to the chloroplast. Residues 66-90 (NEYGSLFADGKQDEDPRPPDNPDNP) form a disordered region. Over residues 75–85 (GKQDEDPRPPD) the composition is skewed to basic and acidic residues.

As to quaternary structure, part of the chloroplast NDH complex, composed of a mixture of chloroplast and nucleus encoded subunits. Component of the NDH subcomplex B, at least composed of PnsB1, PnsB2, PnsB3, PnsB4 and PnsB5.

The protein localises to the plastid. It localises to the chloroplast thylakoid membrane. Functionally, NDH shuttles electrons from NAD(P)H:plastoquinone, via FMN and iron-sulfur (Fe-S) centers, to quinones in the photosynthetic chain and possibly in a chloroplast respiratory chain. The immediate electron acceptor for the enzyme in this species is believed to be plastoquinone. Couples the redox reaction to proton translocation, and thus conserves the redox energy in a proton gradient. The polypeptide is Photosynthetic NDH subunit of subcomplex B 1, chloroplastic (Arabidopsis thaliana (Mouse-ear cress)).